Reading from the N-terminus, the 486-residue chain is Ribulose bisphosphate carboxylase large chain (486 aa).

Substrate contacts are provided by Asn-125 and Thr-175. The active-site Proton acceptor is the Lys-177. Lys-179 lines the substrate pocket. Positions 203, 205, and 206 each coordinate Mg(2+). N6-carboxylysine is present on Lys-203. The Proton acceptor role is filled by His-295. Substrate is bound by residues Arg-296, His-328, and Ser-380.

This sequence belongs to the RuBisCO large chain family. Type I subfamily. Heterohexadecamer of 8 large chains and 8 small chains. Requires Mg(2+) as cofactor.

The catalysed reaction is 2 (2R)-3-phosphoglycerate + 2 H(+) = D-ribulose 1,5-bisphosphate + CO2 + H2O. The enzyme catalyses D-ribulose 1,5-bisphosphate + O2 = 2-phosphoglycolate + (2R)-3-phosphoglycerate + 2 H(+). In terms of biological role, ruBisCO catalyzes two reactions: the carboxylation of D-ribulose 1,5-bisphosphate, the primary event in carbon dioxide fixation, as well as the oxidative fragmentation of the pentose substrate. Both reactions occur simultaneously and in competition at the same active site. The protein is Ribulose bisphosphate carboxylase large chain of Cereibacter sphaeroides (Rhodobacter sphaeroides).